The primary structure comprises 327 residues: Movement protein (327 aa).

Residues 297 to 327 are a coiled coil; sequence SASSSNTENELARVSQNIDLLKNKLKEICGE.

This sequence belongs to the caulimoviridae movement protein family. In terms of assembly, homotrimer, through the coiled-coil domain. Interacts with VAP. May interact (via N-terminus) with host prenylated Rab acceptor protein 1D (PRA1D).

The protein resides in the host cell junction. The protein localises to the host plasmodesma. Functionally, transports viral genome to neighboring plant cells directly through plasmosdesmata, without any budding. The movement protein allows efficient cell to cell propagation, by bypassing the host cell wall barrier. Acts by forming tubules structures that increase the size exclusion limit (SEL) of plasmodesmata, thereby allowing viral ribonucleocapsids to spread directly to neighboring cells. This Arabidopsis thaliana (Mouse-ear cress) protein is Movement protein.